The chain runs to 180 residues: ATP synthase subunit b, chloroplastic (180 aa).

A helical transmembrane segment spans residues 28–48 (VTTLINIGVVLCLLIIFGKGF).

This sequence belongs to the ATPase B chain family. F-type ATPases have 2 components, F(1) - the catalytic core - and F(0) - the membrane proton channel. F(1) has five subunits: alpha(3), beta(3), gamma(1), delta(1), epsilon(1). F(0) has four main subunits: a(1), b(1), b'(1) and c(10-14). The alpha and beta chains form an alternating ring which encloses part of the gamma chain. F(1) is attached to F(0) by a central stalk formed by the gamma and epsilon chains, while a peripheral stalk is formed by the delta, b and b' chains.

Its subcellular location is the plastid. The protein resides in the chloroplast thylakoid membrane. Its function is as follows. F(1)F(0) ATP synthase produces ATP from ADP in the presence of a proton or sodium gradient. F-type ATPases consist of two structural domains, F(1) containing the extramembraneous catalytic core and F(0) containing the membrane proton channel, linked together by a central stalk and a peripheral stalk. During catalysis, ATP synthesis in the catalytic domain of F(1) is coupled via a rotary mechanism of the central stalk subunits to proton translocation. Component of the F(0) channel, it forms part of the peripheral stalk, linking F(1) to F(0). The chain is ATP synthase subunit b, chloroplastic from Cuscuta obtusiflora (Peruvian dodder).